The sequence spans 113 residues: Endoribonuclease SymE (113 aa).

The region spanning 29 to 74 (SRYPDYSRIPAITLKGQWLEAAGFATGTAIDVKVMEGCIVLTAQPP) is the SpoVT-AbrB domain.

It belongs to the SymE family.

It is found in the cytoplasm. Its function is as follows. Involved in the degradation and recycling of damaged RNA. It is itself a target for degradation by the ATP-dependent protease Lon. The protein is Endoribonuclease SymE of Escherichia coli O1:K1 / APEC.